We begin with the raw amino-acid sequence, 141 residues long: Large ribosomal subunit protein uL11B (141 aa).

The protein belongs to the universal ribosomal protein uL11 family. In terms of assembly, part of the ribosomal stalk of the 50S ribosomal subunit. Interacts with L10 and the large rRNA to form the base of the stalk. L10 forms an elongated spine to which L12 dimers bind in a sequential fashion forming a multimeric L10(L12)X complex. One or more lysine residues are methylated.

Forms part of the ribosomal stalk which helps the ribosome interact with GTP-bound translation factors. The protein is Large ribosomal subunit protein uL11B of Halalkalibacterium halodurans (strain ATCC BAA-125 / DSM 18197 / FERM 7344 / JCM 9153 / C-125) (Bacillus halodurans).